The sequence spans 638 residues: Plasma kallikrein (638 aa).

Positions 1 to 19 (MILFKQATYFISLFATVSC) are cleaved as a signal peptide. 4 consecutive Apple domains span residues 21–104 (CLTQ…LKQC), 111–194 (CHRD…LKPC), 201–284 (CHMN…LLTC), and 292–375 (CHSK…LRLC). Disulfide bonds link Cys-21–Cys-104, Cys-47–Cys-77, Cys-51–Cys-57, Cys-111–Cys-194, Cys-137–Cys-166, Cys-141–Cys-147, Cys-201–Cys-284, Cys-227–Cys-256, Cys-231–Cys-237, Cys-292–Cys-375, Cys-318–Cys-347, Cys-322–Cys-328, Cys-340–Cys-345, Cys-383–Cys-503, Cys-419–Cys-435, Cys-517–Cys-584, Cys-548–Cys-563, and Cys-574–Cys-602. Residue Asn-127 is glycosylated (N-linked (GlcNAc...) asparagine). Residue Asn-308 is glycosylated (N-linked (GlcNAc...) asparagine). Positions 391–626 (IVGGTNSSWG…YMDWILEKTQ (236 aa)) constitute a Peptidase S1 domain. Asn-396 carries N-linked (GlcNAc...) asparagine glycosylation. The Charge relay system role is filled by His-434. Asn-453 carries N-linked (GlcNAc...) asparagine glycosylation. Asp-483 (charge relay system) is an active-site residue. N-linked (GlcNAc...) asparagine glycosylation is present at Asn-494. Ser-578 (charge relay system) is an active-site residue.

This sequence belongs to the peptidase S1 family. Plasma kallikrein subfamily. As to quaternary structure, forms a heterodimer with SERPINA5. The zymogen is activated by factor XIIa, which cleaves the molecule into a light chain, which contains the active site, and a heavy chain, which associates with HMW kininogen. These chains are linked by one or more disulfide bonds. Interacts with iripin-3, a serine protease inhibitor from Ixodes ricinus saliva. Interacts with iripin-1, a serine protease inhibitor from Ixodes ricinus saliva. In terms of tissue distribution, found in plasma (at protein level).

The protein resides in the secreted. It catalyses the reaction Cleaves selectively Arg-|-Xaa and Lys-|-Xaa bonds, including Lys-|-Arg and Arg-|-Ser bonds in (human) kininogen to release bradykinin.. Inhibited by SERPINA5. In terms of biological role, participates in the surface-dependent activation of blood coagulation. Activates, in a reciprocal reaction, coagulation factor XII/F12 after binding to negatively charged surfaces. Releases bradykinin from HMW kininogen and may also play a role in the renin-angiotensin system by converting prorenin into renin. This chain is Plasma kallikrein (KLKB1), found in Homo sapiens (Human).